The primary structure comprises 83 residues: NAD(P)H-quinone oxidoreductase subunit L (83 aa).

A run of 2 helical transmembrane segments spans residues 18 to 38 (ILAY…ALFF) and 53 to 73 (LLVY…APFL).

It belongs to the complex I NdhL subunit family. In terms of assembly, NDH-1 can be composed of about 15 different subunits; different subcomplexes with different compositions have been identified which probably have different functions.

It is found in the cellular thylakoid membrane. The catalysed reaction is a plastoquinone + NADH + (n+1) H(+)(in) = a plastoquinol + NAD(+) + n H(+)(out). It carries out the reaction a plastoquinone + NADPH + (n+1) H(+)(in) = a plastoquinol + NADP(+) + n H(+)(out). Its function is as follows. NDH-1 shuttles electrons from an unknown electron donor, via FMN and iron-sulfur (Fe-S) centers, to quinones in the respiratory and/or the photosynthetic chain. The immediate electron acceptor for the enzyme in this species is believed to be plastoquinone. Couples the redox reaction to proton translocation, and thus conserves the redox energy in a proton gradient. Cyanobacterial NDH-1 also plays a role in inorganic carbon-concentration. In Parasynechococcus marenigrum (strain WH8102), this protein is NAD(P)H-quinone oxidoreductase subunit L.